The sequence spans 330 residues: RNA polymerase sigma factor RpoS (330 aa).

The segment at 56 to 89 (DATQLYLGEIGYSPLLTAEEEVYFARRALRGDVA) is sigma-70 factor domain-1. The sigma-70 factor domain-2 stretch occupies residues 94 to 164 (MIESNLRLVV…ERAIMNQTRT (71 aa)). Positions 118-121 (DLIE) match the Interaction with polymerase core subunit RpoC motif. Residues 174-249 (ELNVYLRTAR…DEKENGPEDT (76 aa)) are sigma-70 factor domain-3. The segment at 262-315 (WLFELNAKQREVLARRFGLLGYEAATLEDVGREIGLTRERVRQIQVEGLRRLRE) is sigma-70 factor domain-4. The segment at residues 288–307 (LEDVGREIGLTRERVRQIQV) is a DNA-binding region (H-T-H motif).

It belongs to the sigma-70 factor family. RpoS subfamily. Interacts with the RNA polymerase core enzyme and RssB.

It localises to the cytoplasm. Functionally, sigma factors are initiation factors that promote the attachment of RNA polymerase to specific initiation sites and are then released. This sigma factor is the master transcriptional regulator of the stationary phase and the general stress response. Controls, positively or negatively, the expression of several hundred genes, which are mainly involved in metabolism, transport, regulation and stress management. Its function is as follows. Protects stationary phase cells from killing induced by endoribonuclease MazF. The polypeptide is RNA polymerase sigma factor RpoS (Escherichia coli (strain K12)).